Reading from the N-terminus, the 165-residue chain is Lipoprotein signal peptidase (165 aa).

Helical transmembrane passes span 9–29 (PFLWISAVAFFTDLITKLAVV), 65–85 (WQKYFFILLALAVSFMILFFL), and 97–119 (TGYALMIGGALANAADRAYHGFV). Residues D121 and D139 contribute to the active site. The helical transmembrane segment at 134–154 (VFNVADIAICIGAGLLAIDAF) threads the bilayer.

It belongs to the peptidase A8 family.

It is found in the cell inner membrane. It catalyses the reaction Release of signal peptides from bacterial membrane prolipoproteins. Hydrolyzes -Xaa-Yaa-Zaa-|-(S,diacylglyceryl)Cys-, in which Xaa is hydrophobic (preferably Leu), and Yaa (Ala or Ser) and Zaa (Gly or Ala) have small, neutral side chains.. It participates in protein modification; lipoprotein biosynthesis (signal peptide cleavage). Its function is as follows. This protein specifically catalyzes the removal of signal peptides from prolipoproteins. The sequence is that of Lipoprotein signal peptidase from Histophilus somni (strain 2336) (Haemophilus somnus).